The following is a 557-amino-acid chain: Dihydroxy-acid dehydratase (557 aa).

Position 49 (Cys49) interacts with [2Fe-2S] cluster. Asp81 lines the Mg(2+) pocket. Residue Cys122 participates in [2Fe-2S] cluster binding. Residues Asp123 and Lys124 each coordinate Mg(2+). Lys124 is subject to N6-carboxylysine. Cys194 provides a ligand contact to [2Fe-2S] cluster. Glu446 serves as a coordination point for Mg(2+). The active-site Proton acceptor is Ser472.

This sequence belongs to the IlvD/Edd family. In terms of assembly, homodimer. [2Fe-2S] cluster serves as cofactor. It depends on Mg(2+) as a cofactor.

The catalysed reaction is (2R)-2,3-dihydroxy-3-methylbutanoate = 3-methyl-2-oxobutanoate + H2O. The enzyme catalyses (2R,3R)-2,3-dihydroxy-3-methylpentanoate = (S)-3-methyl-2-oxopentanoate + H2O. It participates in amino-acid biosynthesis; L-isoleucine biosynthesis; L-isoleucine from 2-oxobutanoate: step 3/4. It functions in the pathway amino-acid biosynthesis; L-valine biosynthesis; L-valine from pyruvate: step 3/4. Its function is as follows. Functions in the biosynthesis of branched-chain amino acids. Catalyzes the dehydration of (2R,3R)-2,3-dihydroxy-3-methylpentanoate (2,3-dihydroxy-3-methylvalerate) into 2-oxo-3-methylpentanoate (2-oxo-3-methylvalerate) and of (2R)-2,3-dihydroxy-3-methylbutanoate (2,3-dihydroxyisovalerate) into 2-oxo-3-methylbutanoate (2-oxoisovalerate), the penultimate precursor to L-isoleucine and L-valine, respectively. This Prochlorococcus marinus (strain MIT 9301) protein is Dihydroxy-acid dehydratase.